Reading from the N-terminus, the 424-residue chain is Tryptophan synthase beta chain (424 aa).

At lysine 108 the chain carries N6-(pyridoxal phosphate)lysine.

The protein belongs to the TrpB family. In terms of assembly, tetramer of two alpha and two beta chains. It depends on pyridoxal 5'-phosphate as a cofactor.

The enzyme catalyses (1S,2R)-1-C-(indol-3-yl)glycerol 3-phosphate + L-serine = D-glyceraldehyde 3-phosphate + L-tryptophan + H2O. Its pathway is amino-acid biosynthesis; L-tryptophan biosynthesis; L-tryptophan from chorismate: step 5/5. Its function is as follows. The beta subunit is responsible for the synthesis of L-tryptophan from indole and L-serine. This is Tryptophan synthase beta chain (trpB) from Thermoplasma acidophilum (strain ATCC 25905 / DSM 1728 / JCM 9062 / NBRC 15155 / AMRC-C165).